The following is a 241-amino-acid chain: Ribose-5-phosphate isomerase A (241 aa).

Substrate-binding positions include 28-31 (TGST), 83-86 (DGAD), and 96-99 (KGGG). The active-site Proton acceptor is Glu105. Lys123 lines the substrate pocket.

This sequence belongs to the ribose 5-phosphate isomerase family. Homodimer.

It catalyses the reaction aldehydo-D-ribose 5-phosphate = D-ribulose 5-phosphate. Its pathway is carbohydrate degradation; pentose phosphate pathway; D-ribose 5-phosphate from D-ribulose 5-phosphate (non-oxidative stage): step 1/1. Catalyzes the reversible conversion of ribose-5-phosphate to ribulose 5-phosphate. This chain is Ribose-5-phosphate isomerase A, found in Bradyrhizobium diazoefficiens (strain JCM 10833 / BCRC 13528 / IAM 13628 / NBRC 14792 / USDA 110).